The chain runs to 263 residues: Ribosomal RNA large subunit methyltransferase E (263 aa).

The interval 1-34 (MSSAEGPKSGGGSKGSKSEASSRVRGSAPTGSRD) is disordered. S-adenosyl-L-methionine-binding residues include G102, W104, D126, D142, and D166. Residue K206 is the Proton acceptor of the active site.

The protein belongs to the class I-like SAM-binding methyltransferase superfamily. RNA methyltransferase RlmE family.

It localises to the cytoplasm. The enzyme catalyses uridine(2552) in 23S rRNA + S-adenosyl-L-methionine = 2'-O-methyluridine(2552) in 23S rRNA + S-adenosyl-L-homocysteine + H(+). Specifically methylates the uridine in position 2552 of 23S rRNA at the 2'-O position of the ribose in the fully assembled 50S ribosomal subunit. The polypeptide is Ribosomal RNA large subunit methyltransferase E (Rhodospirillum rubrum (strain ATCC 11170 / ATH 1.1.1 / DSM 467 / LMG 4362 / NCIMB 8255 / S1)).